Reading from the N-terminus, the 538-residue chain is Putative cysteine ligase BshC (538 aa).

A coiled-coil region spans residues 460–484 (KINEQIELLERMLKRNVEKKHEVEL).

The protein belongs to the BshC family.

Functionally, involved in bacillithiol (BSH) biosynthesis. May catalyze the last step of the pathway, the addition of cysteine to glucosamine malate (GlcN-Mal) to generate BSH. The polypeptide is Putative cysteine ligase BshC (Bacillus cereus (strain ATCC 10987 / NRS 248)).